Here is a 262-residue protein sequence, read N- to C-terminus: MAVVLASPAAGGVAAGGFVVRNLDLFYGTHQALHQISMTIPERAVTAIIGPSGCGKSTFLRCLNRMNDLVPDARIQGHVSFRGQDLYAPGADPVEIRYRIGMIFQKPNPFPKSIYENVAFGPRINGYDGDLDEIVEGALRRAALWDEVKDRLRKPALTLSGGQQQRLCIARALAVNPEVLLMDEPTSALDPIATGKIEELMTSLKQEYTIVLVTHSMQQAARVSDYTAFFLDGRLVEMDRTERIFSTPSDRRTEDYITGRFG.

The ABC transporter domain maps to 18–257 (FVVRNLDLFY…PSDRRTEDYI (240 aa)). 50–57 (GPSGCGKS) lines the ATP pocket.

This sequence belongs to the ABC transporter superfamily. Phosphate importer (TC 3.A.1.7) family. In terms of assembly, the complex is composed of two ATP-binding proteins (PstB), two transmembrane proteins (PstC and PstA) and a solute-binding protein (PstS).

It is found in the cell membrane. It carries out the reaction phosphate(out) + ATP + H2O = ADP + 2 phosphate(in) + H(+). In terms of biological role, part of the ABC transporter complex PstSACB involved in phosphate import. Responsible for energy coupling to the transport system. The chain is Phosphate import ATP-binding protein PstB 2 from Symbiobacterium thermophilum (strain DSM 24528 / JCM 14929 / IAM 14863 / T).